A 337-amino-acid polypeptide reads, in one-letter code: MTTPTPPVLLRTAGELHARVRRGRRAVVMTMGALHEGHATLIRTARDIAGPDGEVVVTVFVNPLQFGAGEDLDRYPRTLDADLEIAGRAGADAVFAPAVDEVYPGGEPQVRVTAGPMGGRLEGASRPGHFDGMLTVVAKLLHLTRPDLALYGQKDAQQLALIRRMVRDLNFGVEIVGVPTVREEDGLALSSRNRYLSTAERRTALALSQALFAGLDRHAAQEALCARAREVPATQARAEALSALGESRAAADAHAVATSAPGSATAVRDAARLVLDDAARATPPLELDYLALVDPSDFTEIGDDHTGEAVLAVAARVGATRLIDNVHLTFGPLGAAS.

Residue 31–38 (MGALHEGH) coordinates ATP. Residue H38 is the Proton donor of the active site. Q65 serves as a coordination point for (R)-pantoate. Residue Q65 coordinates beta-alanine. ATP is bound at residue 152–155 (GQKD). Position 158 (Q158) interacts with (R)-pantoate. Residues V181 and 189 to 192 (LSSR) each bind ATP.

The protein belongs to the pantothenate synthetase family. As to quaternary structure, homodimer.

It is found in the cytoplasm. The enzyme catalyses (R)-pantoate + beta-alanine + ATP = (R)-pantothenate + AMP + diphosphate + H(+). It functions in the pathway cofactor biosynthesis; (R)-pantothenate biosynthesis; (R)-pantothenate from (R)-pantoate and beta-alanine: step 1/1. In terms of biological role, catalyzes the condensation of pantoate with beta-alanine in an ATP-dependent reaction via a pantoyl-adenylate intermediate. This chain is Pantothenate synthetase, found in Streptomyces coelicolor (strain ATCC BAA-471 / A3(2) / M145).